The sequence spans 228 residues: MTEYLLSAGICMAIVSILLIGMAISNVSKEQYAKRFFFFATSCLVLTLVVASSLSSSANASQTDNGVNRSGSEYPTVYSATSTKKLHKEPATLIKAIDGDTVKLMYKGQPMTFRLLLVDTPETKHPKKGVEKYGPEASAFTKKMVENAKKIEVEFDKGQRTDKYGRGLAYIYADGKMVNEALVRQGLAKVAYVYKPNNTHEQLLRKSEAQAKKEKLNIWSEDNADSGQ.

The first 23 residues, 1 to 23 (MTEYLLSAGICMAIVSILLIGMA), serve as a signal peptide directing secretion. Residues 24-60 (ISNVSKEQYAKRFFFFATSCLVLTLVVASSLSSSANA) constitute a propeptide that is removed on maturation. Position 100 (aspartate 100) interacts with Ca(2+). Arginine 114 is an active-site residue. Aspartate 119 and threonine 120 together coordinate Ca(2+). Active-site residues include glutamate 122 and arginine 166.

The protein belongs to the thermonuclease family. It depends on Ca(2+) as a cofactor.

It localises to the secreted. It carries out the reaction Endonucleolytic cleavage to nucleoside 3'-phosphates and 3'-phosphooligonucleotide end-products.. Its function is as follows. Enzyme that catalyzes the hydrolysis of both DNA and RNA at the 5' position of the phosphodiester bond. The protein is Thermonuclease (nuc) of Staphylococcus aureus (strain MRSA252).